The following is a 90-amino-acid chain: MNEVISQPPCNIFRPLILSMHLSPVSILSPVLLIYLVIHSQNELVSMSWLFRSTICFGVSLFLSFFLVRILWGIAYSYNSNSMSIYFSYI.

Transmembrane regions (helical) follow at residues 17 to 37 (ILSM…IYLV) and 55 to 75 (ICFG…WGIA).

The protein localises to the membrane. This is an uncharacterized protein from Schizosaccharomyces pombe (strain 972 / ATCC 24843) (Fission yeast).